Reading from the N-terminus, the 105-residue chain is Large ribosomal subunit protein uL24 (105 aa).

Belongs to the universal ribosomal protein uL24 family. As to quaternary structure, part of the 50S ribosomal subunit.

In terms of biological role, one of two assembly initiator proteins, it binds directly to the 5'-end of the 23S rRNA, where it nucleates assembly of the 50S subunit. One of the proteins that surrounds the polypeptide exit tunnel on the outside of the subunit. The chain is Large ribosomal subunit protein uL24 from Clostridium novyi (strain NT).